Reading from the N-terminus, the 636-residue chain is Protein SOSEKI 2 (636 aa).

The interval 9–103 is DIX-like oligomerization domain; sequence HKIEVIYLLS…YVLKALEVMD (95 aa). 4 disordered regions span residues 164 to 188, 281 to 304, 340 to 393, and 499 to 524; these read VHNN…SRVP, HGRL…TVDI, VEGS…TSAK, and LGSG…VSRP. Polar residues-rich tracts occupy residues 375-390 and 499-510; these read SSKS…TYET and LGSGQASESFSP.

It belongs to the SOSEKI family. Homodimer. Forms long polymer filaments with other SOKs proteins polymers crucial for polar localization and biological activity.

It is found in the cell membrane. SOSEKI proteins locally interpret global polarity cues and can influence cell division orientation to coordinate cell polarization relative to body axes. This chain is Protein SOSEKI 2, found in Physcomitrium patens (Spreading-leaved earth moss).